The following is a 284-amino-acid chain: Ribosome-associated protein oga1 (284 aa).

Residues 1–284 (MSVASKNLFD…LSETDFPALA (284 aa)) form a disordered region. Basic and acidic residues predominate over residues 22–36 (TEKKTAASRDKKRSD). Residues Ser-37 and Ser-51 each carry the phosphoserine modification. Composition is skewed to basic and acidic residues over residues 52 to 73 (RKRD…ADQP) and 119 to 141 (GREF…ERGW). Thr-160 carries the phosphothreonine modification. At Ser-162 the chain carries Phosphoserine. Thr-166 carries the phosphothreonine modification. 2 stretches are compositionally biased toward basic and acidic residues: residues 172 to 186 (ENVK…ERKS) and 194 to 209 (TVEK…KSAP). Residues 214-224 (ASLKKSASQKK) are compositionally biased toward low complexity. Residues 226–237 (AAKESKPKKVLL) are compositionally biased toward basic and acidic residues. The segment covering 245 to 254 (ARPARGGRPN) has biased composition (low complexity). Over residues 263 to 277 (ETASKTQQAPPTLSE) the composition is skewed to polar residues.

The protein belongs to the STM1 family. In terms of assembly, associates with mature 80S ribosomes. Binds to the head domain of the 40S ribosomal subunit and prevents mRNA binding by inserting its alpha-helix domain towards the mRNA entry tunnel at the decoding site, where it blocks the binding of tRNA and mRNA at the A- and P-sites. Interacts with eEF2; interaction sequesters eEF2 at the A-site of the ribosome, thereby blocking the interaction sites of the mRNA-tRNA complex, promoting ribosome stabilization and hibernation. Interacts with sad1. Phosphorylation by TORC1 upon nutrient replenishment inhibits STM1 and causes its release from dormant ribosomes.

The protein localises to the cytoplasm. In terms of biological role, ribosome preservation factor that protect a small pool of nontranslating, vacant ribosomes in cells under nutrient starvation conditions. Under nutrient-limiting conditions, cells reduce ribosome biogenesis and degrade ribosomes via autophagy (ribophagy) or proteasomal degradation. To avoid excessive degradation during starvation, STM1 binds to and protects 80S ribosomes from proteasomal degradation. Under nutrient-sufficient conditions, TORC1 phosphorylates and inhibits STM1 to prevent formation of dormant 80S ribosomes. Acts as an inhibitor of mRNA translation by promoting ribosome hibernation: clamps the two ribosomal subunits, thereby preventing their dissociation, and inhibits translation by excluding mRNA-binding. Acts via its association with eEF2, promoting ribosome stabilization and storage in an inactive state. May also repress translation by preventing association of eEF3 with ribosomes. Binds specifically G4 quadruplex (these are four-stranded right-handed helices, stabilized by guanine base quartets) and purine motif triplex (characterized by a third, antiparallel purine-rich DNA strand located within the major groove of a homopurine stretch of duplex DNA) nucleic acid structures. These structures may be present at telomeres or in rRNAs. Extends chronological lifespan when overexpressed. The sequence is that of Ribosome-associated protein oga1 from Schizosaccharomyces pombe (strain 972 / ATCC 24843) (Fission yeast).